The primary structure comprises 96 residues: Aspartyl/glutamyl-tRNA(Asn/Gln) amidotransferase subunit C (96 aa).

This sequence belongs to the GatC family. Heterotrimer of A, B and C subunits.

It carries out the reaction L-glutamyl-tRNA(Gln) + L-glutamine + ATP + H2O = L-glutaminyl-tRNA(Gln) + L-glutamate + ADP + phosphate + H(+). The enzyme catalyses L-aspartyl-tRNA(Asn) + L-glutamine + ATP + H2O = L-asparaginyl-tRNA(Asn) + L-glutamate + ADP + phosphate + 2 H(+). Functionally, allows the formation of correctly charged Asn-tRNA(Asn) or Gln-tRNA(Gln) through the transamidation of misacylated Asp-tRNA(Asn) or Glu-tRNA(Gln) in organisms which lack either or both of asparaginyl-tRNA or glutaminyl-tRNA synthetases. The reaction takes place in the presence of glutamine and ATP through an activated phospho-Asp-tRNA(Asn) or phospho-Glu-tRNA(Gln). The chain is Aspartyl/glutamyl-tRNA(Asn/Gln) amidotransferase subunit C from Chloroflexus aurantiacus (strain ATCC 29366 / DSM 635 / J-10-fl).